The sequence spans 344 residues: Dimethyladenosine transferase 1, mitochondrial (344 aa).

The transit peptide at 1–27 directs the protein to the mitochondrion; the sequence is MATPGALAKFRLPPLPTIGEIVKLFNL. Residues N36, L38, G63, E85, K86, D111, I112, and N141 each coordinate S-adenosyl-L-methionine.

This sequence belongs to the class I-like SAM-binding methyltransferase superfamily. rRNA adenine N(6)-methyltransferase family. KsgA subfamily.

It is found in the mitochondrion. It catalyses the reaction adenosine(N)/adenosine(N+1) in rRNA + 4 S-adenosyl-L-methionine = N(6)-dimethyladenosine(N)/N(6)-dimethyladenosine(N+1) in rRNA + 4 S-adenosyl-L-homocysteine + 4 H(+). Mitochondrial methyltransferase which uses S-adenosyl methionine to dimethylate two highly conserved adjacent adenosine residues (A1583 and A1584) within the loop of helix 45 at the 3-prime end of 12S rRNA, thereby regulating the assembly or stability of the small subunit of the mitochondrial ribosome. Also required for basal transcription of mitochondrial DNA, probably via its interaction with POLRMT and TFAM. Stimulates transcription independently of the methyltransferase activity. The chain is Dimethyladenosine transferase 1, mitochondrial (tfb1m.L) from Xenopus laevis (African clawed frog).